The following is a 525-amino-acid chain: Sensory neuron membrane protein 1 (525 aa).

The Cytoplasmic portion of the chain corresponds to 1–11 (MLLPKPLKYAA). The helical transmembrane segment at 12–32 (IGGGVFVFGILIGWVIFPVIL) threads the bilayer. Topologically, residues 33-456 (KSQIKKEMAL…LKHQLFIPKR (424 aa)) are extracellular. 3 N-linked (GlcNAc...) asparagine glycosylation sites follow: Asn67, Asn105, and Asn229. Disulfide bonds link Cys268-Cys333, Cys297-Cys352, and Cys335-Cys341. N-linked (GlcNAc...) asparagine glycosylation occurs at Asn440. Residues 457 to 477 (IVGVIRWWMVSFGLIAVLAGV) form a helical membrane-spanning segment. Residues 478-525 (MYHFKDNIMGWAAKGESTTAKVNPEDGSNEQRGVSVIGQDREPPKVTM) are Cytoplasmic-facing. Residues 496–525 (TAKVNPEDGSNEQRGVSVIGQDREPPKVTM) are disordered. The span at 516 to 525 (QDREPPKVTM) shows a compositional bias: basic and acidic residues.

The protein belongs to the CD36 family. As to expression, principal component of the olfactory cilia membrane. Localizes to the somata, dendritic neck and cilia of the olfactory neurons (at protein level). Not detected in the axons of ORNs, the cytoplasm of auxiliary cells or non-sensory structures. Expression is universal among ORNs but differential between neuron and sensillum types.

Its subcellular location is the cell membrane. Functionally, plays an olfactory role that is not restricted to pheromone sensitivity. May be involved in the odor detection properties of the olfactory receptor neurons (ORNs) rather than their differentiation and growth. The sequence is that of Sensory neuron membrane protein 1 from Antheraea polyphemus (Polyphemus moth).